The chain runs to 452 residues: ADP-dependent glucose/glucosamine kinase (452 aa).

The region spanning Met-1–Ser-452 is the ADPK domain. D-glucose-binding positions include Asp-33, Glu-87, Gly-111–Gln-112, and His-174. Mg(2+) is bound at residue Glu-264. Asn-290 contributes to the ADP binding site. Residue Glu-293 participates in Mg(2+) binding. ADP is bound by residues His-339–Thr-340, Val-426, and Gly-436. Asp-437 serves as a coordination point for D-glucose. Asp-437 is a binding site for Mg(2+). Asp-437 acts as the Proton acceptor in catalysis.

This sequence belongs to the ADP-dependent glucokinase family. Requires Mg(2+) as cofactor.

The protein resides in the cytoplasm. It carries out the reaction D-glucose + ADP = D-glucose 6-phosphate + AMP + H(+). The catalysed reaction is D-glucosamine + ADP = D-glucosamine 6-phosphate + AMP + H(+). It functions in the pathway carbohydrate degradation; glycolysis. Functionally, catalyzes the ADP-dependent phosphorylation of D-glucose to D-glucose 6-phosphate and glucosamine to glucosamine 6-phosphate. The chain is ADP-dependent glucose/glucosamine kinase from Pyrococcus abyssi (strain GE5 / Orsay).